We begin with the raw amino-acid sequence, 331 residues long: Biotin synthase (331 aa).

The Radical SAM core domain occupies 52–277 (PDVEVEGIIS…RTMLRFAGGR (226 aa)). Cys-67, Cys-71, and Cys-74 together coordinate [4Fe-4S] cluster. [2Fe-2S] cluster-binding residues include Cys-110, Cys-143, Cys-202, and Arg-272.

This sequence belongs to the radical SAM superfamily. Biotin synthase family. Homodimer. [4Fe-4S] cluster serves as cofactor. The cofactor is [2Fe-2S] cluster.

The enzyme catalyses (4R,5S)-dethiobiotin + (sulfur carrier)-SH + 2 reduced [2Fe-2S]-[ferredoxin] + 2 S-adenosyl-L-methionine = (sulfur carrier)-H + biotin + 2 5'-deoxyadenosine + 2 L-methionine + 2 oxidized [2Fe-2S]-[ferredoxin]. The protein operates within cofactor biosynthesis; biotin biosynthesis; biotin from 7,8-diaminononanoate: step 2/2. Catalyzes the conversion of dethiobiotin (DTB) to biotin by the insertion of a sulfur atom into dethiobiotin via a radical-based mechanism. The chain is Biotin synthase from Mycobacterium sp. (strain JLS).